A 153-amino-acid chain; its full sequence is Insulin-like growth factor 1 (153 aa).

Residues 49–77 (GPETLCGAELVDALQFVCGPRGFYFNKPT) form a b region. 3 disulfides stabilise this stretch: Cys-54–Cys-96, Cys-66–Cys-109, and Cys-95–Cys-100. A c region spans residues 78-89 (GYGSSIRRAPQT). The interval 90 to 110 (GIVDECCFRSCDLRRLEMYCA) is a. The interval 111 to 118 (PLKPTKAA) is d. Positions 119–153 (RSIRAQRHTDMPKTQKEVHLKNTSRGSAGNKTYRM) are cleaved as a propeptide — e peptide. A disordered region spans residues 120–153 (SIRAQRHTDMPKTQKEVHLKNTSRGSAGNKTYRM). The segment covering 125-138 (RHTDMPKTQKEVHL) has biased composition (basic and acidic residues). Positions 139 to 153 (KNTSRGSAGNKTYRM) are enriched in polar residues.

It belongs to the insulin family. In terms of assembly, forms a ternary complex with IGFR1 and ITGAV:ITGB3. Forms a ternary complex with IGFR1 and ITGA6:ITGB4. Interacts with SH2D3C isoform 2. Forms a ternary complex with IGFBP3 and ALS.

Its subcellular location is the secreted. The insulin-like growth factors, isolated from plasma, are structurally and functionally related to insulin but have a much higher growth-promoting activity. May be a physiological regulator of [1-14C]-2-deoxy-D-glucose (2DG) transport and glycogen synthesis in osteoblasts. Stimulates glucose transport in bone-derived osteoblastic (PyMS) cells and is effective at much lower concentrations than insulin, not only regarding glycogen and DNA synthesis but also with regard to enhancing glucose uptake. May play a role in synapse maturation. Ca(2+)-dependent exocytosis of IGF1 is required for sensory perception of smell in the olfactory bulb. Acts as a ligand for IGF1R. Binds to the alpha subunit of IGF1R, leading to the activation of the intrinsic tyrosine kinase activity which autophosphorylates tyrosine residues in the beta subunit thus initiating a cascade of down-stream signaling events leading to activation of the PI3K-AKT/PKB and the Ras-MAPK pathways. Binds to integrins ITGAV:ITGB3 and ITGA6:ITGB4. Its binding to integrins and subsequent ternary complex formation with integrins and IGFR1 are essential for IGF1 signaling. Induces the phosphorylation and activation of IGFR1, MAPK3/ERK1, MAPK1/ERK2 and AKT1. As part of the MAPK/ERK signaling pathway, acts as a negative regulator of apoptosis in cardiomyocytes via promotion of STUB1/CHIP-mediated ubiquitination and degradation of ICER-type isoforms of CREM. This is Insulin-like growth factor 1 from Mus musculus (Mouse).